The sequence spans 255 residues: MLARLAAKRLLEIRQVFRQPTSQVTRSLSTALNYHLDSPDNKPDLPWEFSEANQSKVKEILSYYPSNYKQSAVIPLLDLAQQQNGGWLPVSAMNAVAKVIEVAPIRVYEVATFYSMFNRAKVGKYHLLVCGTTPCMIRGSRDIESALLDHLGVKRGEVTKDGLFSVGEMECMGCCVNAPMITVADYSNGSEGYTYNYFEDVTPEKVVEIVEKLRKGEKPPHGTQNPKRIKCGPEGGNKTLLGEPKPPQFRDLDAC.

A mitochondrion-targeting transit peptide spans 1–35 (MLARLAAKRLLEIRQVFRQPTSQVTRSLSTALNYH). [2Fe-2S] cluster contacts are provided by C130, C135, C171, and C175. The interval 214–255 (RKGEKPPHGTQNPKRIKCGPEGGNKTLLGEPKPPQFRDLDAC) is disordered.

This sequence belongs to the complex I 24 kDa subunit family. In terms of assembly, complex I is composed of at least 49 different subunits. This is a component of the flavoprotein-sulfur (FP) fragment of the enzyme. The cofactor is [2Fe-2S] cluster.

The protein resides in the mitochondrion inner membrane. It carries out the reaction a ubiquinone + NADH + 5 H(+)(in) = a ubiquinol + NAD(+) + 4 H(+)(out). Functionally, core subunit of the mitochondrial membrane respiratory chain NADH dehydrogenase (Complex I) that is believed to belong to the minimal assembly required for catalysis. Complex I functions in the transfer of electrons from NADH to the respiratory chain. The immediate electron acceptor for the enzyme is believed to be ubiquinone. The protein is NADH dehydrogenase [ubiquinone] flavoprotein 2, mitochondrial of Arabidopsis thaliana (Mouse-ear cress).